Consider the following 185-residue polypeptide: Ribosome-recycling factor (185 aa).

Belongs to the RRF family.

It localises to the cytoplasm. In terms of biological role, responsible for the release of ribosomes from messenger RNA at the termination of protein biosynthesis. May increase the efficiency of translation by recycling ribosomes from one round of translation to another. The chain is Ribosome-recycling factor from Baumannia cicadellinicola subsp. Homalodisca coagulata.